Reading from the N-terminus, the 345-residue chain is MAQKENAYPWPYGSKTSQSGLNTLSQRVLRKEPATTSALALVNRFNSQSTAAPGQKLAENKSQGSTASQGSQNKQPFTIDNFEIGRPLGKGKFGNVYLAREKKSRFIVALKILFKSQIEKEGVEHQLRREIEIQAHLKHPNILQLYNYFYDQQRIYLILEYAPRGELYKELQKSRTFDEQRTATIMEELSDALTYCHKKKVIHRDIKPENLLLGLQGELKIADFGWSVHAPSLRRKTMCGTLDYLPPEMIEGRMHNEMVDLWCIGVLCYELMVGNPPFESPSHSETYRRIVKVDLKFPSSVPSGAQDLISKLLKHNPWQRLPLAEVAAHPWVRANSRRVLPPSAL.

The disordered stretch occupies residues 1 to 25 (MAQKENAYPWPYGSKTSQSGLNTLS). Positions 14 to 25 (SKTSQSGLNTLS) are enriched in polar residues. Threonine 35 carries the post-translational modification Phosphothreonine. The interval 50 to 77 (TAAPGQKLAENKSQGSTASQGSQNKQPF) is disordered. Polar residues predominate over residues 60-77 (NKSQGSTASQGSQNKQPF). The residue at position 62 (serine 62) is a Phosphoserine. Residues 82-332 (FEIGRPLGKG…LAEVAAHPWV (251 aa)) enclose the Protein kinase domain. ATP-binding positions include 88-96 (LGKGKFGNV) and lysine 111. The active-site Proton acceptor is the aspartate 205. Lysine 220 carries the N6-acetyllysine modification. Serine 232 is subject to Phosphoserine. Threonine 237 is modified (phosphothreonine; by autocatalysis).

Belongs to the protein kinase superfamily. Ser/Thr protein kinase family. Aurora subfamily. As to quaternary structure, component of the chromosomal passenger complex (CPC) composed of at least BIRC5/survivin, CDCA8/borealin, INCENP, AURKB or AURKC; predominantly independent AURKB- and AURKC-containing complexes exist. Associates with RACGAP1 during M phase. Interacts with SPDYC; this interaction may be required for proper localization of active, Thr-237-phosphorylated AURKB form during prometaphase and metaphase. Interacts with p53/TP53. Interacts (via the middle kinase domain) with NOC2L (via the N- and C-terminus domains). Interacts with CDCA1. Interacts with EVI5. Interacts with JTB. Interacts with NDC80. Interacts with PSMA3. Interacts with RNF2/RING1B. Interacts with SEPTIN1. Interacts with SIRT2. Interacts with TACC1. Interacts with TTC28. The phosphorylation of Thr-237 requires the binding to INCENP and occurs by means of an autophosphorylation mechanism. Thr-237 phosphorylation is indispensable for the AURKB kinase activity. In terms of processing, acetylated at Lys-220 by KAT5 at kinetochores, increasing AURKB activity and promoting accurate chromosome segregation in mitosis. Post-translationally, ubiquitinated by different BCR (BTB-CUL3-RBX1) E3 ubiquitin ligase complexes. Ubiquitinated by the BCR(KLHL9-KLHL13) E3 ubiquitin ligase complex, ubiquitination leads to removal from mitotic chromosomes and is required for cytokinesis. During anaphase, the BCR(KLHL21) E3 ubiquitin ligase complex recruits the CPC complex from chromosomes to the spindle midzone and mediates the ubiquitination of AURKB. Ubiquitination of AURKB by BCR(KLHL21) E3 ubiquitin ligase complex may not lead to its degradation by the proteasome. Deubiquitinated by USP35; inhibiting CDH1-mediated degradation of AURKB. In terms of tissue distribution, expressed in testis, intestine and spleen. All of them are tissues that contain a large number of proliferating cells. Expressed during S phase, in a cell-cycle-dependent fashion.

The protein resides in the nucleus. The protein localises to the chromosome. It is found in the centromere. Its subcellular location is the kinetochore. It localises to the cytoplasm. The protein resides in the cytoskeleton. The protein localises to the spindle. It is found in the midbody. It catalyses the reaction L-seryl-[protein] + ATP = O-phospho-L-seryl-[protein] + ADP + H(+). It carries out the reaction L-threonyl-[protein] + ATP = O-phospho-L-threonyl-[protein] + ADP + H(+). Activity is greatly increased when AURKB is within the CPC complex. In particular, AURKB-phosphorylated INCENP acts as an activator of AURKB. Positive feedback between HASPIN and AURKB contributes to CPC localization. Its function is as follows. Serine/threonine-protein kinase component of the chromosomal passenger complex (CPC), a complex that acts as a key regulator of mitosis. The CPC complex has essential functions at the centromere in ensuring correct chromosome alignment and segregation and is required for chromatin-induced microtubule stabilization and spindle assembly. Involved in the bipolar attachment of spindle microtubules to kinetochores and is a key regulator for the onset of cytokinesis during mitosis. Required for central/midzone spindle assembly and cleavage furrow formation. Key component of the cytokinesis checkpoint, a process required to delay abscission to prevent both premature resolution of intercellular chromosome bridges and accumulation of DNA damage: phosphorylates CHMP4C, leading to retain abscission-competent VPS4 (VPS4A and/or VPS4B) at the midbody ring until abscission checkpoint signaling is terminated at late cytokinesis. AURKB phosphorylates the CPC complex subunits BIRC5/survivin, CDCA8/borealin and INCENP. Phosphorylation of INCENP leads to increased AURKB activity. Other known AURKB substrates involved in centromeric functions and mitosis are CENPA, DES/desmin, GPAF, KIF2C, NSUN2, RACGAP1, SEPTIN1, VIM/vimentin, HASPIN, and histone H3. A positive feedback loop involving HASPIN and AURKB contributes to localization of CPC to centromeres. Phosphorylation of VIM controls vimentin filament segregation in cytokinetic process, whereas histone H3 is phosphorylated at 'Ser-10' and 'Ser-28' during mitosis (H3S10ph and H3S28ph, respectively). AURKB is also required for kinetochore localization of BUB1 and SGO1. Phosphorylation of p53/TP53 negatively regulates its transcriptional activity. Key regulator of active promoters in resting B- and T-lymphocytes: acts by mediating phosphorylation of H3S28ph at active promoters in resting B-cells, inhibiting RNF2/RING1B-mediated ubiquitination of histone H2A and enhancing binding and activity of the USP16 deubiquitinase at transcribed genes. Acts as an inhibitor of CGAS during mitosis: catalyzes phosphorylation of the N-terminus of CGAS during the G2-M transition, blocking CGAS liquid phase separation and activation, and thereby preventing CGAS-induced autoimmunity. Phosphorylates KRT5 during anaphase and telophase. Phosphorylates ATXN10 which promotes phosphorylation of ATXN10 by PLK1 and may play a role in the regulation of cytokinesis and stimulating the proteasomal degradation of ATXN10. The protein is Aurora kinase B (Aurkb) of Mus musculus (Mouse).